Consider the following 166-residue polypeptide: NADPH-dependent 7-cyano-7-deazaguanine reductase (166 aa).

C57 serves as the catalytic Thioimide intermediate. D64 acts as the Proton donor in catalysis. Substrate is bound by residues 79-81 (VES) and 98-99 (HE).

This sequence belongs to the GTP cyclohydrolase I family. QueF type 1 subfamily.

It localises to the cytoplasm. The enzyme catalyses 7-aminomethyl-7-carbaguanine + 2 NADP(+) = 7-cyano-7-deazaguanine + 2 NADPH + 3 H(+). The protein operates within tRNA modification; tRNA-queuosine biosynthesis. Its function is as follows. Catalyzes the NADPH-dependent reduction of 7-cyano-7-deazaguanine (preQ0) to 7-aminomethyl-7-deazaguanine (preQ1). The chain is NADPH-dependent 7-cyano-7-deazaguanine reductase from Staphylococcus epidermidis (strain ATCC 35984 / DSM 28319 / BCRC 17069 / CCUG 31568 / BM 3577 / RP62A).